Reading from the N-terminus, the 153-residue chain is Ribonuclease H (153 aa).

One can recognise an RNase H type-1 domain in the interval 1–141; that stretch reads MKKIQLFTDG…CDDLARRAAE (141 aa). Mg(2+) is bound by residues Asp-9, Glu-47, Asp-69, and Asp-133.

The protein belongs to the RNase H family. In terms of assembly, monomer. It depends on Mg(2+) as a cofactor.

The protein localises to the cytoplasm. It carries out the reaction Endonucleolytic cleavage to 5'-phosphomonoester.. Endonuclease that specifically degrades the RNA of RNA-DNA hybrids. This Psychromonas ingrahamii (strain DSM 17664 / CCUG 51855 / 37) protein is Ribonuclease H.